Here is a 261-residue protein sequence, read N- to C-terminus: Thiamine thiazole synthase (261 aa).

NAD(+) is bound by residues S33, 52 to 53 (ER), G60, V124, and 152 to 154 (HVD). Fe cation is bound by residues D154 and H169. Residue M219 participates in NAD(+) binding. R229 lines the glycine pocket.

The protein belongs to the THI4 family. As to quaternary structure, homooctamer; tetramer of dimers. It depends on Fe(2+) as a cofactor.

The enzyme catalyses hydrogen sulfide + glycine + NAD(+) = ADP-5-ethyl-4-methylthiazole-2-carboxylate + nicotinamide + 3 H2O + H(+). The protein operates within cofactor biosynthesis; thiamine diphosphate biosynthesis. In terms of biological role, involved in the biosynthesis of the thiazole moiety of thiamine. Catalyzes the conversion of NAD and glycine to adenosine diphosphate 5-(2-hydroxyethyl)-4-methylthiazole-2-carboxylate (ADT), an adenylated thiazole intermediate, using free sulfide as a source of sulfur. The sequence is that of Thiamine thiazole synthase from Pyrobaculum arsenaticum (strain DSM 13514 / JCM 11321 / PZ6).